The chain runs to 504 residues: Anaerobic nitric oxide reductase transcription regulator NorR (504 aa).

Asp-57 is modified (4-aspartylphosphate). The 230-residue stretch at 187-416 (MIGLSPGMTQ…LEHAIHRAVV (230 aa)) folds into the Sigma-54 factor interaction domain. Residues 215–222 (GETGTGKE) and 278–287 (ADNGTLFLDE) each bind ATP. Residues 479–498 (WAACARMLETDVANLHRLAK) constitute a DNA-binding region (H-T-H motif).

The protein operates within nitrogen metabolism; nitric oxide reduction. Functionally, required for the expression of anaerobic nitric oxide (NO) reductase, acts as a transcriptional activator for at least the norVW operon. Activation also requires sigma-54. The protein is Anaerobic nitric oxide reductase transcription regulator NorR of Escherichia coli O6:H1 (strain CFT073 / ATCC 700928 / UPEC).